A 421-amino-acid polypeptide reads, in one-letter code: Enolase (421 aa).

Glu207 acts as the Proton donor in catalysis. Residues Asp244, Glu285, and Asp312 each contribute to the Mg(2+) site. Lys337 serves as the catalytic Proton acceptor. (2R)-2-phosphoglycerate contacts are provided by Lys337, Arg366, Ser367, and Lys388.

The protein belongs to the enolase family. Mg(2+) is required as a cofactor.

Its subcellular location is the cytoplasm. The protein localises to the secreted. It localises to the cell surface. It catalyses the reaction (2R)-2-phosphoglycerate = phosphoenolpyruvate + H2O. The protein operates within carbohydrate degradation; glycolysis; pyruvate from D-glyceraldehyde 3-phosphate: step 4/5. Functionally, catalyzes the reversible conversion of 2-phosphoglycerate (2-PG) into phosphoenolpyruvate (PEP). It is essential for the degradation of carbohydrates via glycolysis. This is Enolase from Ehrlichia ruminantium (strain Gardel).